Here is a 58-residue protein sequence, read N- to C-terminus: Small ribosomal subunit protein bS21 (58 aa).

Belongs to the bacterial ribosomal protein bS21 family.

In Lactobacillus acidophilus (strain ATCC 700396 / NCK56 / N2 / NCFM), this protein is Small ribosomal subunit protein bS21.